Consider the following 352-residue polypeptide: Replication factor C subunit 5 (352 aa).

Belongs to the activator 1 small subunits family. In terms of assembly, heteropentamer of subunits rfc1, rfc2, rfc3, rfc4 and rfc5 that forms a complex with PCNA in the presence of ATP.

Its subcellular location is the nucleus. Its function is as follows. The elongation of primed DNA templates by DNA polymerase delta and epsilon requires the action of the accessory proteins proliferating cell nuclear antigen (PCNA) and activator 1. In Neurospora crassa (strain ATCC 24698 / 74-OR23-1A / CBS 708.71 / DSM 1257 / FGSC 987), this protein is Replication factor C subunit 5.